A 370-amino-acid polypeptide reads, in one-letter code: Chorismate synthase (370 aa).

Position 48 (Arg-48) interacts with NADP(+). FMN is bound by residues 125–127 (RSS), 241–242 (NA), Gly-286, 301–305 (KPTSS), and Arg-327.

Belongs to the chorismate synthase family. In terms of assembly, homotetramer. FMNH2 serves as cofactor.

It catalyses the reaction 5-O-(1-carboxyvinyl)-3-phosphoshikimate = chorismate + phosphate. Its pathway is metabolic intermediate biosynthesis; chorismate biosynthesis; chorismate from D-erythrose 4-phosphate and phosphoenolpyruvate: step 7/7. Catalyzes the anti-1,4-elimination of the C-3 phosphate and the C-6 proR hydrogen from 5-enolpyruvylshikimate-3-phosphate (EPSP) to yield chorismate, which is the branch point compound that serves as the starting substrate for the three terminal pathways of aromatic amino acid biosynthesis. This reaction introduces a second double bond into the aromatic ring system. The polypeptide is Chorismate synthase (Ruegeria sp. (strain TM1040) (Silicibacter sp.)).